The sequence spans 326 residues: tRNA dimethylallyltransferase 2 (326 aa).

Position 14 to 21 (14 to 21 (GPTASGKT)) interacts with ATP. Position 16–21 (16–21 (TASGKT)) interacts with substrate. The interval 39–42 (DSMQ) is interaction with substrate tRNA.

This sequence belongs to the IPP transferase family. Monomer. The cofactor is Mg(2+).

It catalyses the reaction adenosine(37) in tRNA + dimethylallyl diphosphate = N(6)-dimethylallyladenosine(37) in tRNA + diphosphate. Catalyzes the transfer of a dimethylallyl group onto the adenine at position 37 in tRNAs that read codons beginning with uridine, leading to the formation of N6-(dimethylallyl)adenosine (i(6)A). The sequence is that of tRNA dimethylallyltransferase 2 from Geotalea daltonii (strain DSM 22248 / JCM 15807 / FRC-32) (Geobacter daltonii).